The sequence spans 507 residues: Alkyl hydroperoxide reductase subunit F (507 aa).

Aspartate 207–isoleucine 222 is an FAD binding site. An intrachain disulfide couples cysteine 335 to cysteine 338. Aspartate 347 to alanine 361 is a binding site for NAD(+). Threonine 467 to aspartate 477 serves as a coordination point for FAD.

It belongs to the class-II pyridine nucleotide-disulfide oxidoreductase family. Homodimer. FAD serves as cofactor.

Functionally, serves to protect the cell against DNA damage by alkyl hydroperoxides. It can use either NADH or NADPH as electron donor for direct reduction of redox dyes or of alkyl hydroperoxides when combined with the AhpC protein. The protein is Alkyl hydroperoxide reductase subunit F (ahpF) of Staphylococcus aureus (strain MRSA252).